Consider the following 81-residue polypeptide: Putative snRNP Sm-like protein (81 aa).

A Sm domain is found at 13 to 81 (RPLDALGNSL…RGDNIVYISP (69 aa)).

This sequence belongs to the snRNP Sm proteins family.

This chain is Putative snRNP Sm-like protein, found in Methanothermobacter thermautotrophicus (strain ATCC 29096 / DSM 1053 / JCM 10044 / NBRC 100330 / Delta H) (Methanobacterium thermoautotrophicum).